Consider the following 206-residue polypeptide: Thymidylate kinase (206 aa).

Residue glycine 10 to serine 17 participates in ATP binding.

The protein belongs to the thymidylate kinase family.

It catalyses the reaction dTMP + ATP = dTDP + ADP. Its function is as follows. Phosphorylation of dTMP to form dTDP in both de novo and salvage pathways of dTTP synthesis. The polypeptide is Thymidylate kinase (Neisseria gonorrhoeae (strain ATCC 700825 / FA 1090)).